A 445-amino-acid chain; its full sequence is Protein trichome berefringence-like 7 (445 aa).

The helical; Signal-anchor for type II membrane protein transmembrane segment at 69–89 (IIAGTIVSFLVIIAGGYLYVV) threads the bilayer. Residues 188–190 (GDS) carry the GDS motif motif. The short motif at 418-432 (DCSHWCLPGVPDIWN) is the DCXHWCLPGXXDXWN motif element.

The protein belongs to the PC-esterase family. TBL subfamily.

The protein resides in the membrane. Its function is as follows. May act as a bridging protein that binds pectin and other cell wall polysaccharides. Probably involved in maintaining esterification of pectins. May be involved in the specific O-acetylation of cell wall polymers. This Arabidopsis thaliana (Mouse-ear cress) protein is Protein trichome berefringence-like 7 (TBL7).